The chain runs to 689 residues: Methionine--tRNA ligase (689 aa).

The short motif at 16–26 (PYANAGLHLGH) is the 'HIGH' region element. Cys-147, Cys-150, Cys-160, and Cys-163 together coordinate Zn(2+). Positions 342 to 346 (KMSKS) match the 'KMSKS' region motif. Residue Lys-345 coordinates ATP. In terms of domain architecture, tRNA-binding spans 585 to 689 (DFAKVDLRVG…AGVKPGMRVG (105 aa)).

The protein belongs to the class-I aminoacyl-tRNA synthetase family. MetG type 1 subfamily. As to quaternary structure, homodimer. The cofactor is Zn(2+).

It localises to the cytoplasm. The catalysed reaction is tRNA(Met) + L-methionine + ATP = L-methionyl-tRNA(Met) + AMP + diphosphate. Is required not only for elongation of protein synthesis but also for the initiation of all mRNA translation through initiator tRNA(fMet) aminoacylation. The protein is Methionine--tRNA ligase of Chromobacterium violaceum (strain ATCC 12472 / DSM 30191 / JCM 1249 / CCUG 213 / NBRC 12614 / NCIMB 9131 / NCTC 9757 / MK).